Reading from the N-terminus, the 213-residue chain is Putative 3-methyladenine DNA glycosylase (213 aa).

Belongs to the DNA glycosylase MPG family.

The sequence is that of Putative 3-methyladenine DNA glycosylase from Paraburkholderia phytofirmans (strain DSM 17436 / LMG 22146 / PsJN) (Burkholderia phytofirmans).